The following is a 66-amino-acid chain: Large ribosomal subunit protein bL31 (66 aa).

Residues Cys-16, Cys-18, Cys-36, and Cys-39 each coordinate Zn(2+).

It belongs to the bacterial ribosomal protein bL31 family. Type A subfamily. Part of the 50S ribosomal subunit. Zn(2+) serves as cofactor.

Its function is as follows. Binds the 23S rRNA. The chain is Large ribosomal subunit protein bL31 from Priestia megaterium (Bacillus megaterium).